A 414-amino-acid polypeptide reads, in one-letter code: Carboxynorspermidine synthase (414 aa).

The protein belongs to the saccharopine dehydrogenase family. Carboxynorspermidine synthase subfamily. In terms of assembly, homodimer.

The enzyme catalyses carboxynorspermidine + NADP(+) + H2O = L-aspartate 4-semialdehyde + propane-1,3-diamine + NADPH + H(+). It carries out the reaction carboxyspermidine + NADP(+) + H2O = L-aspartate 4-semialdehyde + putrescine + NADPH + H(+). Its activity is regulated as follows. Activated by dithiothreitol and inhibited by SH-reactive compounds. Functionally, involved in norspermidine biosynthesis. Catalyzes the synthesis of carboxynorspermidine from L-aspartate 4-semialdehyde and 1,3-diaminopropane. Is also slightly active with putrescine as a substrate. In Vibrio alginolyticus (strain ATCC 17749 / DSM 2171 / NBRC 15630 / NCIMB 1903 / NCTC 12160 / XII-53), this protein is Carboxynorspermidine synthase.